We begin with the raw amino-acid sequence, 756 residues long: Rab11 family-interacting protein 3 (756 aa).

The segment covering 1–24 (MASAPPASPPGSEPPGPDPEPGGP) has biased composition (pro residues). The tract at residues 1–204 (MASAPPASPP…SEPVGSQEDG (204 aa)) is disordered. The tract at residues 2–435 (ASAPPASPPG…RLSSKKVARY (434 aa)) is important for binding to DYNC1LI1. The span at 27-39 (PGAAQLAPGPAEL) shows a compositional bias: low complexity. S52 bears the Phosphoserine mark. Positions 53 to 68 (PGLDEPAPGAAADGGA) are enriched in low complexity. Residues 84–94 (DPGPSAPPPRS) are compositionally biased toward pro residues. Phosphoserine; by CDK1 is present on S102. EF-hand domains are found at residues 202–237 (EDGP…YGAE) and 234–269 (YGAE…IRNG). Ca(2+) is bound by residues D215, D217, D219, D226, D247, S249, and D258. 6 positions are modified to phosphoserine: S281, S348, S488, S538, S647, and S648. Residues 484 to 588 (GEQHSRLRQE…LLDEIESLTL (105 aa)) form an ARF-binding domain (ABD) region. Positions 485–694 (EQHSRLRQEN…NGQIITLSIQ (210 aa)) form a coiled coil. The tract at residues 645–664 (RSSSMGLQEYHSRARESELE) is disordered. A compositionally biased stretch (basic and acidic residues) spans 654 to 664 (YHSRARESELE). The FIP-RBD domain occupies 694-756 (QGAKSLFSTA…ETNPSILEVK (63 aa)).

As to quaternary structure, homodimer. Interacts with RAB11A; the interaction is direct and is required for the recruitment to endosomes. Interacts with RAB11B. Forms a ternary complex with RAB11A and dynein intermediate chain DYNC1LI1; RAB11FIP3 links RAB11A to dynein and the interaction regulates endocytic trafficking. Interacts with dynein intermediate chain and dynactin (DCTN1); the interaction activates dynein processivity. Interacts with ARF6 and EXOC7; the interaction serves for recruitment and tethering of recycling endosomes-derived vesicles to the cleavage furrow/midbody. Interacts with RACGAP1/MgcRacGAP; the interaction occurs at late telophase and is required for recruitment and tethering of recycling endosomes-derived vesicles to the cleavage furrow/midbody. Forms a complex with RAB11A and Rabin8/RAB3IP, probably a heterohexamer with two of each protein subunit, where RAB3IP and RAB11FIP3 simultaneously bind to RAB11A; the complex promotes preciliary trafficking. Forms a complex containing RAB11A, ASAP1, RAB3IP, RAP11FIP3 and ARF4; the complex promotes preciliary trafficking; the complex binds to RHO in photoreceptor cells and promotes RHO ciliary transport. Interacts with RAB11FIP4. Interacts with RAB25. Post-translationally, phosphorylated at Ser-102 by CDK1 during metaphase, and dephosphorylated as cells enter telophase.

The protein resides in the endosome membrane. Its subcellular location is the recycling endosome membrane. It is found in the cytoplasm. The protein localises to the cytoskeleton. It localises to the microtubule organizing center. The protein resides in the centrosome. Its subcellular location is the cleavage furrow. It is found in the midbody. The protein localises to the golgi apparatus membrane. It localises to the golgi apparatus. The protein resides in the trans-Golgi network membrane. Its function is as follows. Downstream effector molecule for Rab11 GTPase which is involved in endocytic trafficking, cytokinesis and intracellular ciliogenesis by participating in membrane delivery. Recruited by Rab11 to endosomes where it links Rab11 to dynein motor complex. The functional Rab11-RAB11FIP3-dynein complex regulates the movement of peripheral sorting endosomes (SE) along microtubule tracks toward the microtubule organizing center/centrosome, generating the endocytic recycling compartment (ERC) during interphase of cell cycle. Facilitates the interaction between dynein and dynactin and activates dynein processivity. Binding with ASAP1 is needed to regulate the pericentrosomal localization of recycling endosomes. The Rab11-RAB11FIP3 complex is also implicated in the transport during telophase of vesicles derived from recycling endosomes to the cleavage furrow via centrosome-anchored microtubules, where the vesicles function to deliver membrane during late cytokinesis and abscission. The recruitment of Rab11-RAB11FIP3-containing endosomes to the cleavage furrow and tethering to the midbody is co-mediated by RAB11FIP3 interaction with ARF6-exocyst and RACGAP1-MKLP1 tethering complexes. Also involved in the Rab11-Rabin8-Rab8 ciliogenesis cascade by facilitating the orderly assembly of a ciliary targeting complex containing Rab11, ASAP1, Rabin8/RAB3IP, RAB11FIP3 and ARF4, which directs preciliary vesicle trafficking to mother centriole and ciliogenesis initiation. Also promotes the activity of Rab11 and ASAP1 in the ARF4-dependent Golgi-to-cilia transport of the sensory receptor rhodopsin. Competes with WDR44 for binding to Rab11, which controls intracellular ciliogenesis pathway. May play a role in breast cancer cell motility by regulating actin cytoskeleton. The protein is Rab11 family-interacting protein 3 of Homo sapiens (Human).